We begin with the raw amino-acid sequence, 670 residues long: UvrABC system protein B (670 aa).

The Helicase ATP-binding domain occupies 26–183 (EGLEDGLAHQ…RRLAELQYSR (158 aa)). 39–46 (GVTGSGKT) lines the ATP pocket. The Beta-hairpin signature appears at 92-115 (YYDYYQPEAYVPSSDTFIEKDASV). A Helicase C-terminal domain is found at 431–597 (QVDDLLSEIR…GLNKKISDIL (167 aa)). The 36-residue stretch at 630–665 (ELKIRELESKMLTHAQNLEFEEAAALRDELQALRAQ) folds into the UVR domain.

The protein belongs to the UvrB family. As to quaternary structure, forms a heterotetramer with UvrA during the search for lesions. Interacts with UvrC in an incision complex.

The protein localises to the cytoplasm. In terms of biological role, the UvrABC repair system catalyzes the recognition and processing of DNA lesions. A damage recognition complex composed of 2 UvrA and 2 UvrB subunits scans DNA for abnormalities. Upon binding of the UvrA(2)B(2) complex to a putative damaged site, the DNA wraps around one UvrB monomer. DNA wrap is dependent on ATP binding by UvrB and probably causes local melting of the DNA helix, facilitating insertion of UvrB beta-hairpin between the DNA strands. Then UvrB probes one DNA strand for the presence of a lesion. If a lesion is found the UvrA subunits dissociate and the UvrB-DNA preincision complex is formed. This complex is subsequently bound by UvrC and the second UvrB is released. If no lesion is found, the DNA wraps around the other UvrB subunit that will check the other stand for damage. In Pectobacterium carotovorum subsp. carotovorum (strain PC1), this protein is UvrABC system protein B.